Reading from the N-terminus, the 304-residue chain is Homoserine kinase (304 aa).

Pro90–Ser100 contacts ATP.

This sequence belongs to the GHMP kinase family. Homoserine kinase subfamily.

The protein resides in the cytoplasm. The catalysed reaction is L-homoserine + ATP = O-phospho-L-homoserine + ADP + H(+). It participates in amino-acid biosynthesis; L-threonine biosynthesis; L-threonine from L-aspartate: step 4/5. In terms of biological role, catalyzes the ATP-dependent phosphorylation of L-homoserine to L-homoserine phosphate. This Staphylococcus aureus (strain bovine RF122 / ET3-1) protein is Homoserine kinase.